We begin with the raw amino-acid sequence, 63 residues long: Large ribosomal subunit protein bL35 (63 aa).

Residues 26–50 (GSGMRHNLEHKSARKRRALKRDDVL) are disordered.

This sequence belongs to the bacterial ribosomal protein bL35 family.

The protein is Large ribosomal subunit protein bL35 of Bifidobacterium animalis subsp. lactis (strain AD011).